The chain runs to 156 residues: 6,7-dimethyl-8-ribityllumazine synthase (156 aa).

Residues phenylalanine 23, 57-59 (AFE), and 81-83 (AVI) each bind 5-amino-6-(D-ribitylamino)uracil. A (2S)-2-hydroxy-3-oxobutyl phosphate-binding site is contributed by 86-87 (AT). Catalysis depends on histidine 89, which acts as the Proton donor. Residue phenylalanine 114 coordinates 5-amino-6-(D-ribitylamino)uracil. Arginine 128 serves as a coordination point for (2S)-2-hydroxy-3-oxobutyl phosphate.

This sequence belongs to the DMRL synthase family.

The enzyme catalyses (2S)-2-hydroxy-3-oxobutyl phosphate + 5-amino-6-(D-ribitylamino)uracil = 6,7-dimethyl-8-(1-D-ribityl)lumazine + phosphate + 2 H2O + H(+). The protein operates within cofactor biosynthesis; riboflavin biosynthesis; riboflavin from 2-hydroxy-3-oxobutyl phosphate and 5-amino-6-(D-ribitylamino)uracil: step 1/2. In terms of biological role, catalyzes the formation of 6,7-dimethyl-8-ribityllumazine by condensation of 5-amino-6-(D-ribitylamino)uracil with 3,4-dihydroxy-2-butanone 4-phosphate. This is the penultimate step in the biosynthesis of riboflavin. The polypeptide is 6,7-dimethyl-8-ribityllumazine synthase (Campylobacter concisus (strain 13826)).